The following is a 264-amino-acid chain: L-aspartate dehydrogenase (264 aa).

NAD(+) is bound by residues Ala-120 and Asn-186. His-216 is an active-site residue.

Belongs to the L-aspartate dehydrogenase family.

The catalysed reaction is L-aspartate + NADP(+) + H2O = oxaloacetate + NH4(+) + NADPH + H(+). It carries out the reaction L-aspartate + NAD(+) + H2O = oxaloacetate + NH4(+) + NADH + H(+). The protein operates within cofactor biosynthesis; NAD(+) biosynthesis; iminoaspartate from L-aspartate (dehydrogenase route): step 1/1. Functionally, specifically catalyzes the NAD or NADP-dependent dehydrogenation of L-aspartate to iminoaspartate. The polypeptide is L-aspartate dehydrogenase (Serratia proteamaculans (strain 568)).